Here is a 2364-residue protein sequence, read N- to C-terminus: Spectrin beta chain, non-erythrocytic 1 (2364 aa).

Threonine 2 is modified (N-acetylthreonine). Residues 2–275 (TTTVATDYDN…IITYVVTYYH (274 aa)) are actin-binding. Residues isoleucine 14 and serine 36 each carry the phosphoserine modification. 2 consecutive Calponin-homology (CH) domains span residues 54 to 158 (AVQK…LRFQ) and 173 to 278 (KSAK…HYFS). An N6-acetyllysine modification is found at lysine 90. Position 228 is a phosphoserine (serine 228). 15 Spectrin repeats span residues 303 to 411 (MIEK…LALR), 423 to 525 (LARR…QRLE), 530 to 636 (LQKI…RLEE), 639 to 742 (RLWK…RLEE), 745 to 847 (LLHQ…ALQD), 850 to 952 (ALYK…DALL), 957 to 1060 (IQNY…SLGE), 1063 to 1166 (KLQQ…NLLS), 1170 to 1258 (AYQQ…DRHR), 1276 to 1376 (DLQK…AQRL), 1381 to 1482 (KAEL…HNLL), 1486 to 1590 (EIHQ…RLEE), 1592 to 1696 (HRAQ…KLDE), 1698 to 1801 (HRLF…TQIL), and 1805 to 1907 (YELH…RVRL). Phosphoserine occurs at positions 817, 825, 903, 1057, 1076, 1079, and 1237. A phosphoserine mark is found at serine 1388, serine 1447, and serine 1557. The tract at residues 1563–2093 (IRQRLADLKQ…LLEVRRQQEE (531 aa)) is interaction with ANK2. At tyrosine 1805 the chain carries Phosphotyrosine. Lysine 1815, lysine 1913, and lysine 1989 each carry N6-acetyllysine. Spectrin repeat units follow at residues 1914–2014 (FRFF…EWLR) and 2018–2097 (EVHQ…EERK). Residues 2089–2196 (RQQEEEERKR…TLPARTQETP (108 aa)) are disordered. Serine 2102, serine 2128, and serine 2138 each carry phosphoserine. Positions 2115 to 2131 (SQQQWDTSKGEQVSQNG) are enriched in polar residues. Positions 2145–2166 (VDTSEMVNGATEQRTSSKESSP) are enriched in polar residues. Threonine 2147 is modified (phosphothreonine). Serine 2148 is subject to Phosphoserine. Residues 2149–2177 (EMVNGATEQRTSSKESSPIPSPTSDRKAK) form a mediates interaction with CAMSAP1 region. At threonine 2159 the chain carries Phosphothreonine. 5 positions are modified to phosphoserine: serine 2160, serine 2161, serine 2164, serine 2165, and serine 2169. Phosphothreonine is present on threonine 2171. A phosphoserine mark is found at serine 2172 and serine 2184. Over residues 2184-2196 (SAATLPARTQETP) the composition is skewed to polar residues. A phosphothreonine mark is found at threonine 2187 and threonine 2195. The PH domain maps to 2197–2307 (SAQMEGFLNR…WIQAISSAIS (111 aa)). Residues 2309-2364 (DKHEVSASTQSTPASSRAQTLPTSVVTITSESSPGKREKDKEKDKEKRFSLFGKKK) form a disordered region. 2 positions are modified to phosphoserine: serine 2314 and serine 2319. The segment covering 2314–2341 (SASTQSTPASSRAQTLPTSVVTITSESS) has biased composition (polar residues). Residue threonine 2320 is modified to Phosphothreonine. A glycan (O-linked (GlcNAc) serine) is linked at serine 2324. Threonine 2328 is modified (phosphothreonine). Serine 2340 and serine 2341 each carry phosphoserine. A compositionally biased stretch (basic and acidic residues) spans 2342–2357 (PGKREKDKEKDKEKRF).

It belongs to the spectrin family. Interacts with CAMSAP1. Interacts with ANK2. Interacts with CPNE4 (via VWFA domain). Like erythrocyte spectrin, the spectrin-like proteins are capable to form dimers which can further associate to tetramers. Can form heterodimers with SPTAN1. Isoform Short cannot bind to the axonal protein fodaxin. Isoform 2 is present in brain, lung and kidney (at protein level).

The protein localises to the cytoplasm. The protein resides in the cytoskeleton. Its subcellular location is the myofibril. It is found in the sarcomere. It localises to the m line. The protein localises to the cytosol. The protein resides in the cell membrane. Its function is as follows. Fodrin, which seems to be involved in secretion, interacts with calmodulin in a calcium-dependent manner and is thus candidate for the calcium-dependent movement of the cytoskeleton at the membrane. Plays a critical role in central nervous system development and function. This is Spectrin beta chain, non-erythrocytic 1 (SPTBN1) from Homo sapiens (Human).